The chain runs to 140 residues: MRHRVGGRKLQRTSSHRLALFRNQSAALIKHEQIITTLAKARELRPYTEKLITLAKKGGLANRRLAHSRLLDDTQLKKLFDVLAERYKDRNGGYTRIIKAGIRASDAAQMAVIELVDRDTTAKGQDSGPVQVEEQENEEA.

A disordered region spans residues 119-140 (DTTAKGQDSGPVQVEEQENEEA).

This sequence belongs to the bacterial ribosomal protein bL17 family. In terms of assembly, part of the 50S ribosomal subunit. Contacts protein L32.

The protein is Large ribosomal subunit protein bL17 of Zymomonas mobilis subsp. mobilis (strain ATCC 31821 / ZM4 / CP4).